Here is a 410-residue protein sequence, read N- to C-terminus: BTB and MATH domain-containing protein 42 (410 aa).

The span at 1–19 shows a compositional bias: polar residues; sequence MSSRSSWSSTEQINRTISS. Residues 1–29 are disordered; it reads MSSRSSWSSTEQINRTISSRADDLPPQPR. In terms of domain architecture, MATH spans 45–173; it reads STKLEWKIEQ…DGTLFLICEV (129 aa). In terms of domain architecture, BTB spans 219–287; it reads TDCVIHVGNK…MYTGATESLE (69 aa). Residues 389–410 form a disordered region; that stretch reads TSNIPISVSPPPARKRLRRSAK. Positions 401–410 are enriched in basic residues; it reads ARKRLRRSAK.

As to quaternary structure, interacts with cul-3.

It participates in protein modification; protein ubiquitination. In terms of biological role, probable substrate-specific adapter of an E3 ubiquitin-protein ligase complex which mediates the ubiquitination and subsequent proteasomal degradation of target proteins. This Caenorhabditis elegans protein is BTB and MATH domain-containing protein 42 (bath-42).